Reading from the N-terminus, the 104-residue chain is Large ribosomal subunit protein bL21 (104 aa).

Belongs to the bacterial ribosomal protein bL21 family. As to quaternary structure, part of the 50S ribosomal subunit. Contacts protein L20.

Functionally, this protein binds to 23S rRNA in the presence of protein L20. This Streptococcus gordonii (strain Challis / ATCC 35105 / BCRC 15272 / CH1 / DL1 / V288) protein is Large ribosomal subunit protein bL21.